A 211-amino-acid chain; its full sequence is Mitotic spindle assembly checkpoint protein MAD2B (211 aa).

One can recognise an HORMA domain in the interval 13 to 203; it reads QVVADILCEF…SDILKMQLYV (191 aa).

As to quaternary structure, homooligomer. Interacts with rev1. Interacts with rev3l. Interacts with fzr1 (in complex with the anaphase promoting complex APC). May interact with cdc20.

It localises to the nucleus. The protein localises to the cytoplasm. It is found in the cytoskeleton. Its subcellular location is the spindle. Functionally, adapter protein able to interact with different proteins and involved in different biological processes. Mediates the interaction between the error-prone DNA polymerase zeta catalytic subunit rev3l and the inserter polymerase rev1, thereby mediating the second polymerase switching in translesion DNA synthesis. Translesion DNA synthesis releases the replication blockade of replicative polymerases, stalled in presence of DNA lesions. May also play a role in signal transduction in response to DNA damage. May regulate the activation of the anaphase promoting complex APC thereby regulating progression through the cell cycle. Through transcriptional regulation may play a role in epithelial-mesenchymal transdifferentiation. In terms of biological role, inhibits the fzr1-APC complex activity during mitosis. Plays a role in progression of mitosis. This is Mitotic spindle assembly checkpoint protein MAD2B (mad2l2) from Xenopus laevis (African clawed frog).